The primary structure comprises 93 residues: SH3 domain-binding glutamic acid-rich-like protein 3 (93 aa).

Ser-2 carries the post-translational modification N-acetylserine. Residues 2–93 (SGLRVYSTSV…DTLQEFLKLA (92 aa)) enclose the Glutaredoxin domain. Thr-9 carries an O-linked (GalNAc...) threonine glycan.

It belongs to the SH3BGR family. Homodimer. Interacts with MYO1C (via its IQ motifs); the interaction is dependent on calcium and takes place at membrane ruffles. Post-translationally, may be glycosylated.

It localises to the cytoplasm. Its subcellular location is the cytosol. The protein localises to the cell projection. The protein resides in the ruffle membrane. It is found in the nucleus. In terms of biological role, could act as a modulator of glutaredoxin biological activity. May play a role in cytoskeleton organization. In Mus musculus (Mouse), this protein is SH3 domain-binding glutamic acid-rich-like protein 3 (Sh3bgrl3).